Consider the following 151-residue polypeptide: Cathelicidin-3 (151 aa).

The first 17 residues, 1–17 (MLSCWVLLLALLGGACA), serve as a signal peptide directing secretion. Residues 18 to 122 (LPAPLGYSQA…TCVDSMADPV (105 aa)) constitute a propeptide that is removed on maturation. Cystine bridges form between Cys75–Cys86 and Cys97–Cys114. Residues 128–148 (WPLVPVAINTVAAGINLYKAI) traverse the membrane as a helical segment.

This sequence belongs to the cathelicidin family. As to expression, detected in bone marrow, liver and lung.

The protein localises to the secreted. Its subcellular location is the membrane. Functionally, may bind bacterial lipopolysaccharide (LPS). May have antimicrobial activity and play a role in the innate immune response. In Gallus gallus (Chicken), this protein is Cathelicidin-3 (CATHL3).